An 89-amino-acid polypeptide reads, in one-letter code: Arminin 7591 (89 aa).

An N-terminal signal peptide occupies residues 1-18; that stretch reads MRSAFAVLFLALIAITYS. The propeptide occupies 19–58; that stretch reads KNYEDVKEEIKNEVENEILKDLEEDVNEFDDNVQEEVNDA. Leucine 86 is subject to Leucine amide.

Belongs to the arminin family. In terms of tissue distribution, expressed in entodermal epithelium along the body column.

It is found in the secreted. It localises to the target cell membrane. In terms of biological role, antimicrobial peptide with a broad-spectrum antimicrobial activity. Keeps its antibacterial activity under a wide range of salt concentrations that mimic physiological conditions of human blood, which is surprising, since Hydra is an obligate freshwater animal with nearly no salt tolerance. Does not affect red blood cells. The sequence is that of Arminin 7591 from Hydra vulgaris (Hydra).